The chain runs to 417 residues: Cobalamin binding intrinsic factor (417 aa).

An N-terminal signal peptide occupies residues 1–18 (MAWFALYLLSLLWATAGT). 3 cysteine pairs are disulfide-bonded: Cys26–Cys246, Cys103–Cys288, and Cys143–Cys182. Asp171 serves as a coordination point for cob(II)alamin. Ser191 is subject to Phosphoserine. Cob(II)alamin is bound by residues Asp222 and Gln270. N-linked (GlcNAc...) asparagine glycans are attached at residues Asn311, Asn330, and Asn334. Residues 365–370 (SWGLVV) and 386–395 (WQFLSGVTPL) contribute to the cob(II)alamin site. Residue Asn413 is glycosylated (N-linked (GlcNAc...) asparagine).

This sequence belongs to the eukaryotic cobalamin transport proteins family. As to quaternary structure, interacts with CUBN (via CUB domains). In terms of tissue distribution, gastric mucosa.

Its subcellular location is the secreted. Its function is as follows. Promotes absorption of the essential vitamin cobalamin (Cbl) in the ileum. After interaction with CUBN, the CBLIF-cobalamin complex is internalized via receptor-mediated endocytosis. The protein is Cobalamin binding intrinsic factor of Homo sapiens (Human).